We begin with the raw amino-acid sequence, 250 residues long: Ribonuclease PH (250 aa).

Phosphate contacts are provided by residues arginine 86 and 124-126 (GTR).

This sequence belongs to the RNase PH family. As to quaternary structure, homohexameric ring arranged as a trimer of dimers.

The enzyme catalyses tRNA(n+1) + phosphate = tRNA(n) + a ribonucleoside 5'-diphosphate. In terms of biological role, phosphorolytic 3'-5' exoribonuclease that plays an important role in tRNA 3'-end maturation. Removes nucleotide residues following the 3'-CCA terminus of tRNAs; can also add nucleotides to the ends of RNA molecules by using nucleoside diphosphates as substrates, but this may not be physiologically important. Probably plays a role in initiation of 16S rRNA degradation (leading to ribosome degradation) during starvation. This chain is Ribonuclease PH, found in Exiguobacterium sibiricum (strain DSM 17290 / CCUG 55495 / CIP 109462 / JCM 13490 / 255-15).